Here is a 50-residue protein sequence, read N- to C-terminus: Thymosin beta-4 (50 aa).

The interval 1–50 (MLLPATMSDKPDMAEIEKFDKSKLKKTETQEKNPLPSKETIEQEKQAGES) is disordered. Ser8 is modified (phosphoserine). Over residues 9 to 31 (DKPDMAEIEKFDKSKLKKTETQE) the composition is skewed to basic and acidic residues. Lys10 carries the post-translational modification N6-acetyllysine. The residue at position 18 (Lys18) is an N6-acetyllysine; alternate. Residue Lys18 forms a Glycyl lysine isopeptide (Lys-Gly) (interchain with G-Cter in SUMO2); alternate linkage. At Thr29 the chain carries Phosphothreonine. Residue Lys32 is modified to N6-acetyllysine. Ser37 is modified (phosphoserine). At Lys38 the chain carries N6-acetyllysine. The span at 39–50 (ETIEQEKQAGES) shows a compositional bias: basic and acidic residues. Thr40 carries the phosphothreonine modification. Lys45 carries the post-translational modification N6-acetyllysine.

It belongs to the thymosin beta family. Identified in a complex composed of ACTA1, COBL, GSN AND TMSB4X. Interacts with SERPINB1. Post-translationally, acSDKP is inactivated by ACE, which removes the dipeptide Lys-Pro from its C-terminus. In terms of tissue distribution, originally found in thymus but it is widely distributed in many tissues.

Its subcellular location is the cytoplasm. The protein localises to the cytoskeleton. Functionally, plays an important role in the organization of the cytoskeleton. Binds to and sequesters actin monomers (G actin) and therefore inhibits actin polymerization. Potent inhibitor of bone marrow derived stem cell differentiation. Acts by inhibits the entry of hematopoietic pluripotent stem cells into the S-phase. This is Thymosin beta-4 (Tmsb4x) from Mus musculus (Mouse).